A 116-amino-acid chain; its full sequence is UPF0342 protein LBA1592 (116 aa).

Belongs to the UPF0342 family.

This Lactobacillus acidophilus (strain ATCC 700396 / NCK56 / N2 / NCFM) protein is UPF0342 protein LBA1592.